The primary structure comprises 114 residues: Small ribosomal subunit protein uS13m (114 aa).

The tract at residues 92 to 114 (DGLPLRGQRSHTNARTSRKRIRK) is disordered.

Belongs to the universal ribosomal protein uS13 family. Part of the small ribosomal subunit.

The protein localises to the mitochondrion. Its function is as follows. Located at the top of the head of the small subunit, it contacts several helices of the 18S rRNA. The polypeptide is Small ribosomal subunit protein uS13m (RPS13) (Oenothera berteroana (Bertero's evening primrose)).